The primary structure comprises 90 residues: Probable Fe(2+)-trafficking protein (90 aa).

The protein belongs to the Fe(2+)-trafficking protein family.

Its function is as follows. Could be a mediator in iron transactions between iron acquisition and iron-requiring processes, such as synthesis and/or repair of Fe-S clusters in biosynthetic enzymes. The protein is Probable Fe(2+)-trafficking protein of Colwellia psychrerythraea (strain 34H / ATCC BAA-681) (Vibrio psychroerythus).